We begin with the raw amino-acid sequence, 606 residues long: Probable potassium transport system protein Kup 2 (606 aa).

A run of 12 helical transmembrane segments spans residues 18 to 38 (GLVF…IMTL), 46 to 66 (VLGI…VEYA), 97 to 117 (VAFV…DGII), 140 to 160 (AQGV…IFQF), 169 to 189 (AFGP…IVSI), 204 to 224 (AVTF…EVIL), 247 to 267 (AWYF…AFIL), 286 to 306 (ILYI…SQAL), 339 to 359 (IYIG…MLIF), 368 to 388 (AYGL…TMIF), 395 to 415 (WKVP…TANF), and 418 to 438 (LPHG…IMII).

The protein belongs to the HAK/KUP transporter (TC 2.A.72) family.

It localises to the cell inner membrane. The enzyme catalyses K(+)(in) + H(+)(in) = K(+)(out) + H(+)(out). In terms of biological role, transport of potassium into the cell. Likely operates as a K(+):H(+) symporter. In Geobacter metallireducens (strain ATCC 53774 / DSM 7210 / GS-15), this protein is Probable potassium transport system protein Kup 2.